Reading from the N-terminus, the 107-residue chain is Nucleoid-associated protein RBE_0048 (107 aa).

This sequence belongs to the YbaB/EbfC family. Homodimer.

The protein resides in the cytoplasm. It is found in the nucleoid. In terms of biological role, binds to DNA and alters its conformation. May be involved in regulation of gene expression, nucleoid organization and DNA protection. The chain is Nucleoid-associated protein RBE_0048 from Rickettsia bellii (strain RML369-C).